An 80-amino-acid polypeptide reads, in one-letter code: MAFLKKSLFLVLFLGLVSLSICEEEKRENEDEEEQEDDEQSEMKRGMWSTIRNVGKSAAKAANLPAKAALGAISEAVGEQ.

A signal peptide spans 1-22 (MAFLKKSLFLVLFLGLVSLSIC). The propeptide occupies 23-43 (EEEKRENEDEEEQEDDEQSEM). Residues 24–45 (EEKRENEDEEEQEDDEQSEMKR) form a disordered region. Residues 30-40 (EDEEEQEDDEQ) are compositionally biased toward acidic residues. Val77 is modified (valine amide). The propeptide occupies 79-80 (EQ).

The protein belongs to the frog skin active peptide (FSAP) family. Dermaseptin subfamily. In terms of tissue distribution, expressed by the skin glands.

The protein localises to the secreted. Functionally, possesses a potent antimicrobial activity against Gram-positive and Gram-negative bacteria. Probably acts by disturbing membrane functions with its amphipathic structure. The protein is Dermaseptin-A5 of Agalychnis annae (Blue-sided leaf frog).